Reading from the N-terminus, the 466-residue chain is Adenosylhomocysteinase (466 aa).

Residues Thr-57, Asp-132, and Glu-192 each coordinate substrate. 193 to 195 (TTT) provides a ligand contact to NAD(+). Residues Lys-222 and Asp-226 each contribute to the substrate site. Residues Asn-227, 256 to 261 (GYGDVG), Glu-279, Asn-314, 335 to 337 (IGH), and Asn-380 each bind NAD(+).

The protein belongs to the adenosylhomocysteinase family. NAD(+) is required as a cofactor.

Its subcellular location is the cytoplasm. It carries out the reaction S-adenosyl-L-homocysteine + H2O = L-homocysteine + adenosine. Its pathway is amino-acid biosynthesis; L-homocysteine biosynthesis; L-homocysteine from S-adenosyl-L-homocysteine: step 1/1. May play a key role in the regulation of the intracellular concentration of adenosylhomocysteine. This Rhizobium rhizogenes (strain K84 / ATCC BAA-868) (Agrobacterium radiobacter) protein is Adenosylhomocysteinase.